Reading from the N-terminus, the 406-residue chain is Peptidyl-alpha-hydroxyglycine alpha-amidating lyase 2 (406 aa).

The signal sequence occupies residues 1–19 (MSRLLFVALLAISLGYVAS). 4 NHL repeats span residues 168-209 (GAIK…FKPF), 218-261 (GKRF…FNAA), 264-308 (LLRT…PKAG), and 358-402 (DPRS…RVWK). Cystine bridges form between Cys231–Cys251 and Cys293–Cys304.

Belongs to the peptidyl-alpha-hydroxyglycine alpha-amidating lyase family. Requires Zn(2+) as cofactor. In terms of processing, N-glycosylated. Only found in a subset of neurons distributed throughout all levels of the central nervous system (CNS). Present in at least some neuroendocrine cells. In adult brains, it is only present in a small handful of cells, the majority of which being distributed in distal parts of the medulla, with a higher expression in the posterior surface of the brain (at protein level).

It localises to the secreted. The catalysed reaction is a [peptide]-C-terminal (2S)-2-hydroxyglycine = a [peptide]-C-terminal amide + glyoxylate. Peptidyl-alpha-hydroxylglycine alpha-amidating lyase that catalyzes an essential reaction in C-terminal alpha-amidation of peptides. Mediates the dismutation of the unstable peptidyl(2-hydroxyglycine) intermediate to glyoxylate and the corresponding desglycine peptide amide. C-terminal amidation of peptides such as neuropeptides is essential for full biological activity. This is Peptidyl-alpha-hydroxyglycine alpha-amidating lyase 2 (Pal2) from Drosophila melanogaster (Fruit fly).